The chain runs to 134 residues: Small ribosomal subunit protein bS16 (134 aa).

The disordered stretch occupies residues 80–134 (GLAKRPTRSNPTKGEPGKKAQERLAMAKQAEEEAAAKAAEAAAAAAAPAEEAASE). A compositionally biased stretch (low complexity) spans 115–134 (AKAAEAAAAAAAPAEEAASE).

It belongs to the bacterial ribosomal protein bS16 family.

The protein is Small ribosomal subunit protein bS16 of Brucella anthropi (strain ATCC 49188 / DSM 6882 / CCUG 24695 / JCM 21032 / LMG 3331 / NBRC 15819 / NCTC 12168 / Alc 37) (Ochrobactrum anthropi).